Consider the following 270-residue polypeptide: Acyl-[acyl-carrier-protein]--UDP-N-acetylglucosamine O-acyltransferase (270 aa).

This sequence belongs to the transferase hexapeptide repeat family. LpxA subfamily. In terms of assembly, homotrimer.

The protein resides in the cytoplasm. It catalyses the reaction a (3R)-hydroxyacyl-[ACP] + UDP-N-acetyl-alpha-D-glucosamine = a UDP-3-O-[(3R)-3-hydroxyacyl]-N-acetyl-alpha-D-glucosamine + holo-[ACP]. The protein operates within glycolipid biosynthesis; lipid IV(A) biosynthesis; lipid IV(A) from (3R)-3-hydroxytetradecanoyl-[acyl-carrier-protein] and UDP-N-acetyl-alpha-D-glucosamine: step 1/6. Functionally, involved in the biosynthesis of lipid A, a phosphorylated glycolipid that anchors the lipopolysaccharide to the outer membrane of the cell. This Helicobacter acinonychis (strain Sheeba) protein is Acyl-[acyl-carrier-protein]--UDP-N-acetylglucosamine O-acyltransferase.